A 157-amino-acid chain; its full sequence is MKKIVLAGGCFWGVEEFLSRINGVVSTEVGYANGRTENPTYEDICTKNTYFAEVCLVNYDENIISLKELLAKFWTIIDPTSLNKQGNDVGSQYRTGIYYVEPSDLEEILNSKEELQKSYSKKIVTEVKPLENYYKAEEYHQKYLKKNPNGYCHIKLD.

Residue C10 is part of the active site.

This sequence belongs to the MsrA Met sulfoxide reductase family.

It carries out the reaction L-methionyl-[protein] + [thioredoxin]-disulfide + H2O = L-methionyl-(S)-S-oxide-[protein] + [thioredoxin]-dithiol. The enzyme catalyses [thioredoxin]-disulfide + L-methionine + H2O = L-methionine (S)-S-oxide + [thioredoxin]-dithiol. Has an important function as a repair enzyme for proteins that have been inactivated by oxidation. Catalyzes the reversible oxidation-reduction of methionine sulfoxide in proteins to methionine. The polypeptide is Peptide methionine sulfoxide reductase MsrA (Clostridium perfringens (strain SM101 / Type A)).